The chain runs to 206 residues: dCTP deaminase, dUMP-forming (206 aa).

Residues 117–122 (RSSFGR), aspartate 135, 143–145 (TLE), glutamine 163, tyrosine 177, lysine 184, and glutamine 188 contribute to the dCTP site. The active-site Proton donor/acceptor is the glutamate 145.

This sequence belongs to the dCTP deaminase family. As to quaternary structure, homotrimer.

It catalyses the reaction dCTP + 2 H2O = dUMP + NH4(+) + diphosphate. It participates in pyrimidine metabolism; dUMP biosynthesis; dUMP from dCTP: step 1/1. Functionally, bifunctional enzyme that catalyzes both the deamination of dCTP to dUTP and the hydrolysis of dUTP to dUMP without releasing the toxic dUTP intermediate. This is dCTP deaminase, dUMP-forming from Methanococcus maripaludis (strain C7 / ATCC BAA-1331).